The following is a 338-amino-acid chain: Taste receptor type 2 member 39 (338 aa).

Over 1–30 the chain is Extracellular; that stretch reads MLGRCFPPDTKEKQQLRMTKLCDPAESELS. The helical transmembrane segment at 31-51 threads the bilayer; sequence PFLITLILAVLLAEYLIGIIA. Over 52 to 74 the chain is Cytoplasmic; that stretch reads NGFIMAIHAAEWVQNKAVSTSGR. A helical transmembrane segment spans residues 75–95; it reads ILVFLSVSRIALQSLMMLEIT. Topologically, residues 96–116 are extracellular; it reads ISSTSLSFYSEDAVYYAFKIS. Residues 117–137 form a helical membrane-spanning segment; it reads FIFLNFCSLWFAAWLSFFYFV. The Cytoplasmic segment spans residues 138–156; the sequence is KIANFSYPLFLKLRWRITG. Residues 157–177 form a helical membrane-spanning segment; the sequence is LIPWLLWLSVFISFSHSMFCI. The Extracellular portion of the chain corresponds to 178–205; that stretch reads NICTVYCNNSFPIHSSNSTKKTYLSEIN. Residues Asn-185 and Asn-194 are each glycosylated (N-linked (GlcNAc...) asparagine). The helical transmembrane segment at 206–226 threads the bilayer; it reads VVGLAFFFNLGIVTPLIMFIL. Residues 227–262 lie on the Cytoplasmic side of the membrane; the sequence is TATLLILSLKRHTLHMGSNATGSNDPSMEAHMGAIK. A helical transmembrane segment spans residues 263–283; that stretch reads AISYFLILYIFNAVALFIYLS. Residues 284–291 lie on the Extracellular side of the membrane; it reads NMFDINSL. Residues 292–312 traverse the membrane as a helical segment; the sequence is WNNLCQIIMAAYPASHSILLI. The Cytoplasmic portion of the chain corresponds to 313-338; sequence QDNPGLRRAWKRLQLRLHLYPKEWTL.

This sequence belongs to the G-protein coupled receptor T2R family. In terms of tissue distribution, expressed in subsets of taste receptor cells of the tongue and exclusively in gustducin-positive cells.

The protein resides in the membrane. Functionally, receptor that may play a role in the perception of bitterness and is gustducin-linked. May play a role in sensing the chemical composition of the gastrointestinal content. The activity of this receptor may stimulate alpha gustducin, mediate PLC-beta-2 activation and lead to the gating of TRPM5. In Homo sapiens (Human), this protein is Taste receptor type 2 member 39 (TAS2R39).